The sequence spans 161 residues: MKGAKSKGAAKADAKLAVKSKGAEKPAAKGKKGKAGKDPNKPKRAPSAFFVFMGEFREEFKQKNPKNKSVAAVGKAAGERWKSLSESEKAPYVAKANKLKGEYNKAIAAYNKGESAAAAAPKKAAAKEVEEEDEEESDKSKSEINDDDDDEGSDEDEDDDE.

Disordered stretches follow at residues 1–46 (MKGA…KRAP), 60–91 (FKQK…EKAP), and 113–161 (GESA…DDDE). 2 stretches are compositionally biased toward basic and acidic residues: residues 10 to 27 (AKAD…EKPA) and 77 to 89 (AGER…ESEK). A DNA-binding region (HMG box) is located at residues 42-111 (PKRAPSAFFV…EYNKAIAAYN (70 aa)). A compositionally biased stretch (low complexity) spans 114–123 (ESAAAAAPKK). The span at 145 to 161 (NDDDDDEGSDEDEDDDE) shows a compositional bias: acidic residues.

Belongs to the HMGB family.

The protein resides in the nucleus. This Triticum aestivum (Wheat) protein is HMG1/2-like protein.